Consider the following 269-residue polypeptide: MIVVKVGGAEGINYEAVAKDAASLWKEGVKLLLVHGGSAETNKVAEALGHPPRFLTHPGGQVSRLTDRKTLEIFEMVYCGLVNKRLVELLQKEGANAIGLSGLDGRLFVGRRKTAVKYVENGKVKVHRGDYTGTVEEVNKALLDLLLQAGYLPVLTPPALSYENEAINTDGDQIAALLATLYGAEALVYLSNVPGLLARYPDEASLVREIPVERIEDPEYLALAQGRMKRKVMGAVEAVRGGVKRVVFADARVENPIRRALSGEGTVVR.

Position 5-8 (5-8 (KVGG)) interacts with ATP. Residue arginine 64 participates in substrate binding. Position 78 (tyrosine 78) interacts with ATP. Asparagine 168 contributes to the substrate binding site.

It belongs to the acetylglutamate kinase family. LysZ subfamily.

The protein localises to the cytoplasm. The catalysed reaction is [amino-group carrier protein]-C-terminal-N-(1,4-dicarboxybutan-1-yl)-L-glutamine + ATP = [amino-group carrier protein]-C-terminal-N-(1-carboxy-5-phosphooxy-5-oxopentan-1-yl)-L-glutamine + ADP. It functions in the pathway amino-acid biosynthesis; L-lysine biosynthesis via AAA pathway; L-lysine from L-alpha-aminoadipate (Thermus route): step 2/5. In terms of biological role, catalyzes the phosphorylation of LysW-gamma-alpha-aminoadipate. Does not phosphorylate N-acetyl-glutamate. In Thermus thermophilus (strain ATCC BAA-163 / DSM 7039 / HB27), this protein is [LysW]-aminoadipate kinase.